Reading from the N-terminus, the 475-residue chain is Ribulose bisphosphate carboxylase large chain (475 aa).

Positions 1–2 (MS) are excised as a propeptide. Pro3 carries the N-acetylproline modification. Residue Lys14 is modified to N6,N6,N6-trimethyllysine. Residues Asn123 and Thr173 each coordinate substrate. The Proton acceptor role is filled by Lys175. A substrate-binding site is contributed by Lys177. The Mg(2+) site is built by Lys201, Asp203, and Glu204. At Lys201 the chain carries N6-carboxylysine. The active-site Proton acceptor is His294. 3 residues coordinate substrate: Arg295, His327, and Ser379.

This sequence belongs to the RuBisCO large chain family. Type I subfamily. As to quaternary structure, heterohexadecamer of 8 large chains and 8 small chains; disulfide-linked. The disulfide link is formed within the large subunit homodimers. Mg(2+) serves as cofactor. Post-translationally, the disulfide bond which can form in the large chain dimeric partners within the hexadecamer appears to be associated with oxidative stress and protein turnover.

The protein resides in the plastid. It is found in the chloroplast. It carries out the reaction 2 (2R)-3-phosphoglycerate + 2 H(+) = D-ribulose 1,5-bisphosphate + CO2 + H2O. The catalysed reaction is D-ribulose 1,5-bisphosphate + O2 = 2-phosphoglycolate + (2R)-3-phosphoglycerate + 2 H(+). Its function is as follows. RuBisCO catalyzes two reactions: the carboxylation of D-ribulose 1,5-bisphosphate, the primary event in carbon dioxide fixation, as well as the oxidative fragmentation of the pentose substrate in the photorespiration process. Both reactions occur simultaneously and in competition at the same active site. In Afrocarpus gracilior (African fern pine), this protein is Ribulose bisphosphate carboxylase large chain.